A 407-amino-acid polypeptide reads, in one-letter code: MDNVLPMDSDLFPNISTNTSESNQFVQPTWQIVLWAAAYTVIVVTSVVGNVVVIWIILAHKRMRTVTNYFLVNLAFAEACMAAFNTVVNFTYAVHNVWYYGLFYCKFHNFFPIAALFASIYSMTAVAFDRYMAIIHPLQPRLSATATKVVIFVIWVLALLLAFPQGYYSTTETMPSRVVCMIEWPEHPNRTYEKAYHICVTVLIYFLPLLVIGYAYTVVGITLWASEIPGDSSDRYHEQVSAKRKVVKMMIVVVCTFAICWLPFHVFFLLPYINPDLYLKKFIQQVYLASMWLAMSSTMYNPIIYCCLNDRFRLGFKHAFRCCPFISAGDYEGLEMKSTRYLQTQSSVYKVSRLETTISTVVGAHEEEPEEGPKATPSSLDLTSNGSSRSNSKTMTESSSFYSNMLA.

At 1–31 (MDNVLPMDSDLFPNISTNTSESNQFVQPTWQ) the chain is on the extracellular side. Asparagine 14 and asparagine 18 each carry an N-linked (GlcNAc...) asparagine glycan. The chain crosses the membrane as a helical span at residues 32 to 54 (IVLWAAAYTVIVVTSVVGNVVVI). The Cytoplasmic segment spans residues 55–64 (WIILAHKRMR). The helical transmembrane segment at 65 to 86 (TVTNYFLVNLAFAEACMAAFNT) threads the bilayer. Topologically, residues 87 to 106 (VVNFTYAVHNVWYYGLFYCK) are extracellular. The cysteines at positions 105 and 180 are disulfide-linked. Residues 107–128 (FHNFFPIAALFASIYSMTAVAF) traverse the membrane as a helical segment. At 129 to 148 (DRYMAIIHPLQPRLSATATK) the chain is on the cytoplasmic side. A helical transmembrane segment spans residues 149-169 (VVIFVIWVLALLLAFPQGYYS). The Extracellular segment spans residues 170-194 (TTETMPSRVVCMIEWPEHPNRTYEK). The chain crosses the membrane as a helical span at residues 195–219 (AYHICVTVLIYFLPLLVIGYAYTVV). Topologically, residues 220-248 (GITLWASEIPGDSSDRYHEQVSAKRKVVK) are cytoplasmic. A helical membrane pass occupies residues 249-270 (MMIVVVCTFAICWLPFHVFFLL). The Extracellular portion of the chain corresponds to 271–283 (PYINPDLYLKKFI). The chain crosses the membrane as a helical span at residues 284-308 (QQVYLASMWLAMSSTMYNPIIYCCL). The Cytoplasmic portion of the chain corresponds to 309–407 (NDRFRLGFKH…SSSFYSNMLA (99 aa)). The S-palmitoyl cysteine moiety is linked to residue cysteine 322. The segment at 362 to 407 (VGAHEEEPEEGPKATPSSLDLTSNGSSRSNSKTMTESSSFYSNMLA) is disordered. Residues 376–407 (TPSSLDLTSNGSSRSNSKTMTESSSFYSNMLA) are compositionally biased toward polar residues.

This sequence belongs to the G-protein coupled receptor 1 family. As to quaternary structure, interacts with ARRB1.

Its subcellular location is the cell membrane. Functionally, this is a receptor for the tachykinin neuropeptide substance P. It is probably associated with G proteins that activate a phosphatidylinositol-calcium second messenger system. The rank order of affinity of this receptor to tachykinins is: substance P &gt; substance K &gt; neuromedin-K. The chain is Substance-P receptor (Tacr1) from Rattus norvegicus (Rat).